Reading from the N-terminus, the 317-residue chain is Malate dehydrogenase (317 aa).

NAD(+) is bound by residues 10 to 15 and Asp-34; that span reads GGGQIG. Positions 83 and 89 each coordinate substrate. NAD(+) is bound by residues Asn-96 and 119–121; that span reads ISN. Asn-121 and Arg-152 together coordinate substrate. His-176 acts as the Proton acceptor in catalysis.

Belongs to the LDH/MDH superfamily. MDH type 3 family.

It catalyses the reaction (S)-malate + NAD(+) = oxaloacetate + NADH + H(+). Its function is as follows. Catalyzes the reversible oxidation of malate to oxaloacetate. The polypeptide is Malate dehydrogenase (Citrifermentans bemidjiense (strain ATCC BAA-1014 / DSM 16622 / JCM 12645 / Bem) (Geobacter bemidjiensis)).